Here is a 249-residue protein sequence, read N- to C-terminus: Vesicle-associated membrane protein-associated protein A (249 aa).

The residue at position 2 (Ala2) is an N-acetylalanine. The Cytoplasmic segment spans residues 2 to 227; sequence ASASGTMAKH…VSFRENVTSP (226 aa). Positions 14–131 constitute an MSP domain; that stretch reads ILVLDPPTDL…MDSKLRCVFE (118 aa). Positions 50–53 are phosphorylated FFAT motif binding; it reads KVKT. Lys125 carries the N6-acetyllysine modification. Ser166 is modified (phosphoserine). Residues 169–205 adopt a coiled-coil conformation; the sequence is DTETRKLVEECKRLQGEMMKLSEENRLLRDEGLRLRK. Residue Thr170 is modified to Phosphothreonine. Residues Ser214, Ser216, and Ser219 each carry the phosphoserine modification. The chain crosses the membrane as a helical; Anchor for type IV membrane protein span at residues 228–248; that stretch reads LPSLLVVIAAIFIGFFLGKFI.

This sequence belongs to the VAMP-associated protein (VAP) (TC 9.B.17) family. As to quaternary structure, homodimer; disulfide-linked. Heterodimer with VAPB. Interacts with VAMP1, VAMP2, STX1A, BET1, SEC22C and with the C-terminal domain of OCLN. Interacts (via MSP domain) with OSBPL1A (via FFAT motif). Interacts (via MSP domain) with ZFYVE27; may retain ZFYVE27 in the endoplasmic reticulum and regulate its function in cell projections formation. Interacts with OSBP. Interacts (via C-terminus) with RSAD2/viperin (via C-terminus). Interacts with IFITM3. Interacts with OSBPL3 (phosphorylated form). Interacts with KIF5A in a ZFYVE27-dependent manner. Interacts (via MSP domain) with STARD3 (via phosphorylated FFAT motif); this interaction recruits VAPA to the endosome. Interacts with STARD3NL (via FFAT motif). Interacts with CERT1. Interacts with PLEKHA3 and SACM1L to form a ternary complex. Interacts with VPS13A (via FFAT motif). Interacts with RB1CC1 (via phosphorylated FFAT motif), MIGA2 (via phosphorylated FFAT motif), RMDN3 (via phosphorylated FFAT motif), KCNB1 (via phosphorylated FFAT motif) and KCNB2 (via phosphorylated FFAT motif). Interacts (via MSP domain) with WDR44 (via FFAT-like motif); the interactions connect the endoplasmic reticulum (ER) with the endosomal tubule.

It is found in the endoplasmic reticulum membrane. The protein localises to the cell junction. It localises to the tight junction. Its subcellular location is the cell membrane. Endoplasmic reticulum (ER)-anchored protein that mediates the formation of contact sites between the ER and endosomes via interaction with FFAT motif-containing proteins such as STARD3 or WDR44. STARD3-VAPA interaction enables cholesterol transfer from the ER to endosomes. Via interaction with WDR44 participates in neosynthesized protein export. In addition, recruited to the plasma membrane through OSBPL3 binding. The OSBPL3-VAPA complex stimulates RRAS signaling which in turn attenuates integrin beta-1 (ITGB1) activation at the cell surface. With OSBPL3, may regulate ER morphology. May play a role in vesicle trafficking. The polypeptide is Vesicle-associated membrane protein-associated protein A (Bos taurus (Bovine)).